The chain runs to 250 residues: DNA repair protein RecO (250 aa).

It belongs to the RecO family.

Its function is as follows. Involved in DNA repair and RecF pathway recombination. The sequence is that of DNA repair protein RecO from Staphylococcus aureus (strain bovine RF122 / ET3-1).